We begin with the raw amino-acid sequence, 262 residues long: Phosphatidylserine decarboxylase proenzyme (262 aa).

Active-site charge relay system; for autoendoproteolytic cleavage activity residues include Asp-86, His-142, and Ser-226. The active-site Schiff-base intermediate with substrate; via pyruvic acid; for decarboxylase activity is the Ser-226. Ser-226 carries the pyruvic acid (Ser); by autocatalysis modification.

This sequence belongs to the phosphatidylserine decarboxylase family. PSD-B subfamily. Prokaryotic type I sub-subfamily. Heterodimer of a large membrane-associated beta subunit and a small pyruvoyl-containing alpha subunit. Requires pyruvate as cofactor. Is synthesized initially as an inactive proenzyme. Formation of the active enzyme involves a self-maturation process in which the active site pyruvoyl group is generated from an internal serine residue via an autocatalytic post-translational modification. Two non-identical subunits are generated from the proenzyme in this reaction, and the pyruvate is formed at the N-terminus of the alpha chain, which is derived from the carboxyl end of the proenzyme. The autoendoproteolytic cleavage occurs by a canonical serine protease mechanism, in which the side chain hydroxyl group of the serine supplies its oxygen atom to form the C-terminus of the beta chain, while the remainder of the serine residue undergoes an oxidative deamination to produce ammonia and the pyruvoyl prosthetic group on the alpha chain. During this reaction, the Ser that is part of the protease active site of the proenzyme becomes the pyruvoyl prosthetic group, which constitutes an essential element of the active site of the mature decarboxylase.

It is found in the cell membrane. It carries out the reaction a 1,2-diacyl-sn-glycero-3-phospho-L-serine + H(+) = a 1,2-diacyl-sn-glycero-3-phosphoethanolamine + CO2. It participates in phospholipid metabolism; phosphatidylethanolamine biosynthesis; phosphatidylethanolamine from CDP-diacylglycerol: step 2/2. Functionally, catalyzes the formation of phosphatidylethanolamine (PtdEtn) from phosphatidylserine (PtdSer). This is Phosphatidylserine decarboxylase proenzyme from Bacillus cereus (strain ATCC 10987 / NRS 248).